An 811-amino-acid chain; its full sequence is Phosphoinositide 3-kinase adapter protein 1 (811 aa).

The 139-residue stretch at 8–146 (RGCDILIFYS…AVRKAISEDS (139 aa)) folds into the TIR domain. Residues 10-145 (CDILIFYSPD…AAVRKAISED (136 aa)) form a necessary and sufficient to mediate inhibition of NF-kappa-B downstream of activated TLRs; may mediate interaction with MYD88 and TIRAP region. The tract at residues 146 to 169 (SGCDSVTDTEPEDERELPFSKQTN) is disordered. Residues 182 to 318 (VQPDRIRCGA…NIPASGLHLF (137 aa)) form the DBB domain. Tyrosine 264 carries the phosphotyrosine modification. Residues tyrosine 420, tyrosine 445, and tyrosine 460 each carry the phosphotyrosine; by SYK modification. Tyrosine 513 carries the phosphotyrosine; by ABL1 modification. A disordered region spans residues 525–551 (DLANRPPVPVPRPEASAPGPPPPPDNE). Positions 530–550 (PPVPVPRPEASAPGPPPPPDN) are enriched in pro residues. Residues tyrosine 553, tyrosine 570, and tyrosine 594 each carry the phosphotyrosine; by ABL1 modification. The residue at position 642 (serine 642) is a Phosphoserine. Position 694 is a phosphotyrosine; by ABL1 (tyrosine 694). Residues 702-811 (VLPARTELRR…PPPPVPPRGR (110 aa)) form a disordered region. The span at 707–716 (TELRRGDWKT) shows a compositional bias: basic and acidic residues. Low complexity predominate over residues 717 to 740 (DSMSSTASSTSNRSSTRSLLSVSS). Serine 718 is subject to Phosphoserine. Positions 801–811 (HPPPPVPPRGR) are enriched in pro residues.

In terms of assembly, homooligomer. Interacts (phosphorylated on tyrosine residues within YXXM motifs) with PIK3R1 (via SH2 domain); required for BCR- and TLR-mediated activation of phosphoinositide 3-kinase. Interacts (via polyproline C-terminal region) with ABI1 (via SH3 domain); the interaction promotes phosphorylation of PIK3AP1 by ABL1. May interact with MYD88 and TIRAP. Post-translationally, constitutively phosphorylated. Phosphorylated on tyrosine residues in C-terminal region by ABL1. Phosphorylated on tyrosine residues within the YXXM motifs by BTK and SYK. Isoform 1 and isoform 2 are phosphorylated on tyrosine residues, most likely within the YXXM motifs, via CD19 activation. Toll-like receptor activation induces appearance of a phosphorylated form associated with membranes. Predominantly expressed in spleen (at protein level). Expressed at lower levels in thymus, liver and lung. Expressed in B-cells, macrophages and natural killer (NK) cells.

It localises to the cytoplasm. The protein resides in the cell membrane. In terms of biological role, signaling adapter that contributes to B-cell development by linking B-cell receptor (BCR) signaling to the phosphoinositide 3-kinase (PI3K)-Akt signaling pathway. Has a complementary role to the BCR coreceptor CD19, coupling BCR and PI3K activation by providing a docking site for the PI3K subunit PIK3R1. Alternatively, links Toll-like receptor (TLR) signaling to PI3K activation, a process preventing excessive inflammatory cytokine production. Also involved in the activation of PI3K in natural killer cells. May be involved in the survival of mature B-cells via activation of REL. The sequence is that of Phosphoinositide 3-kinase adapter protein 1 (Pik3ap1) from Mus musculus (Mouse).